The primary structure comprises 317 residues: tRNA dimethylallyltransferase (317 aa).

Residue 21–28 (GPTASGKS) participates in ATP binding. 23–28 (TASGKS) contacts substrate. Positions 46–49 (DSMQ) are interaction with substrate tRNA.

It belongs to the IPP transferase family. In terms of assembly, monomer. Mg(2+) serves as cofactor.

It catalyses the reaction adenosine(37) in tRNA + dimethylallyl diphosphate = N(6)-dimethylallyladenosine(37) in tRNA + diphosphate. Its function is as follows. Catalyzes the transfer of a dimethylallyl group onto the adenine at position 37 in tRNAs that read codons beginning with uridine, leading to the formation of N6-(dimethylallyl)adenosine (i(6)A). The protein is tRNA dimethylallyltransferase of Nitrobacter hamburgensis (strain DSM 10229 / NCIMB 13809 / X14).